We begin with the raw amino-acid sequence, 21 residues long: FLNALKNFAKTAGKRLKSLLN.

Expressed by the skin glands.

Its subcellular location is the secreted. Functionally, has antibacterial activity against E.coli HP101BA (MIC=6.4 uM), K.pneumoniae PTCC1388 (MIC=7.3 uM), M.luteus PTCC1625 (MIC=4.7 uM) and S.aureus PTCC1431 (MIC=5.3 uM). Has no or very limited (&lt;3%) hemolytic activity at concentrations of 15 ug/ml and 60 ug/ml, respectively. This is Cyanophlyctin from Euphlyctis cyanophlyctis (Skittering frog).